Consider the following 201-residue polypeptide: 3-isopropylmalate dehydratase small subunit (201 aa).

Belongs to the LeuD family. LeuD type 1 subfamily. Heterodimer of LeuC and LeuD.

The enzyme catalyses (2R,3S)-3-isopropylmalate = (2S)-2-isopropylmalate. It participates in amino-acid biosynthesis; L-leucine biosynthesis; L-leucine from 3-methyl-2-oxobutanoate: step 2/4. Its function is as follows. Catalyzes the isomerization between 2-isopropylmalate and 3-isopropylmalate, via the formation of 2-isopropylmaleate. This chain is 3-isopropylmalate dehydratase small subunit, found in Sinorhizobium medicae (strain WSM419) (Ensifer medicae).